The following is a 438-amino-acid chain: Phospholipase D Y (438 aa).

The signal sequence occupies residues 1 to 19 (MIINRLFIIIVLFFVNVNS). N-linked (GlcNAc...) asparagine glycosylation is present at Asn-50. A PLD phosphodiesterase 1 domain is found at 145-172 (GSGVLHTKLIIIDESSAYVGSANADWSS). Active-site residues include His-150, Lys-152, and Asp-157. Asn-223, Asn-336, and Asn-394 each carry an N-linked (GlcNAc...) asparagine glycan. One can recognise a PLD phosphodiesterase 2 domain in the interval 373–399 (YTRVNHAKFMVTEKQSYVGTSNWSQDY).

This sequence belongs to the phospholipase D family.

The catalysed reaction is a 1,2-diacyl-sn-glycero-3-phosphocholine + H2O = a 1,2-diacyl-sn-glycero-3-phosphate + choline + H(+). Inhibited by butan-1-ol. In terms of biological role, hydrolyzes membrane phospholipids, such as PtdCho (phosphatidylcholine), producing the free headgroup and PtdOH (phosphatidic acid; signaling molecule on its own). The polypeptide is Phospholipase D Y (pldY) (Dictyostelium discoideum (Social amoeba)).